The chain runs to 179 residues: MLTRQQKEAIVKEMTEIFKRSSLALFADFTGFTVADLTELRSRLREKYNGGARFKVVKNTLLTLSLKDAGYEGYEEFLKGPTAVLYVTDGDPVEAVKIIYNFYKEKNADLSKLKGGFLEGRKFSSEEVEKIAKLPSKEELYAMLVGRVKAPISGLVFVLSGILRNLVLVLNAVKEKKSE.

Belongs to the universal ribosomal protein uL10 family. In terms of assembly, part of the ribosomal stalk of the 50S ribosomal subunit. The N-terminus interacts with L11 and the large rRNA to form the base of the stalk. The C-terminus forms an elongated spine to which L12 dimers bind in a sequential fashion forming a multimeric L10(L12)X complex.

Forms part of the ribosomal stalk, playing a central role in the interaction of the ribosome with GTP-bound translation factors. The polypeptide is Large ribosomal subunit protein uL10 (Thermotoga neapolitana (strain ATCC 49049 / DSM 4359 / NBRC 107923 / NS-E)).